We begin with the raw amino-acid sequence, 300 residues long: Ribonuclease HIII (300 aa).

Positions 86 to 300 (RPRLGVDESG…FNEICDSASA (215 aa)) constitute an RNase H type-2 domain. A divalent metal cation is bound by residues Asp92, Glu93, and Asp196.

This sequence belongs to the RNase HII family. RnhC subfamily. It depends on Mn(2+) as a cofactor. Mg(2+) is required as a cofactor.

Its subcellular location is the cytoplasm. It catalyses the reaction Endonucleolytic cleavage to 5'-phosphomonoester.. In terms of biological role, endonuclease that specifically degrades the RNA of RNA-DNA hybrids. This Chlamydia felis (strain Fe/C-56) (Chlamydophila felis) protein is Ribonuclease HIII.